Reading from the N-terminus, the 410-residue chain is Putative transporter AmpG 1 (410 aa).

12 helical membrane-spanning segments follow: residues 5–25, 40–60, 76–96, 98–118, 141–161, 169–189, 217–237, 265–285, 290–310, 320–340, 356–378, and 383–402; these read LSII…TGNT, IGLL…APIF, LSWI…LSFL, PFDN…FSSM, GIYI…AIYL, EIYK…IVGV, ILKP…LILY, VGKF…GFIM, ILDS…LFII, LLFI…TAYI, YSFF…GYIV, and WQNF…LVLL.

It belongs to the major facilitator superfamily.

It localises to the cell inner membrane. The protein is Putative transporter AmpG 1 (ampG1) of Rickettsia bellii (strain RML369-C).